A 616-amino-acid chain; its full sequence is Chaperone protein HscA (616 aa).

The protein belongs to the heat shock protein 70 family.

Chaperone involved in the maturation of iron-sulfur cluster-containing proteins. Has a low intrinsic ATPase activity which is markedly stimulated by HscB. Involved in the maturation of IscU. In Escherichia coli O45:K1 (strain S88 / ExPEC), this protein is Chaperone protein HscA.